A 1015-amino-acid polypeptide reads, in one-letter code: Putative calcium-transporting ATPase 7, plasma membrane-type (1015 aa).

N-acetylmethionine is present on Met1. The Cytoplasmic segment spans residues Met1–Ser161. The interval Val20 to Val31 is interaction with calmodulin. A Phosphoserine; by CPK modification is found at Ser45. Residues Phe162–Ala182 traverse the membrane as a helical segment. Residues Phe183 to His200 are Lumenal-facing. A helical transmembrane segment spans residues Asp201 to Tyr221. Over Arg222–Leu349 the chain is Cytoplasmic. The helical transmembrane segment at Asn350–Ala369 threads the bilayer. Topologically, residues Val370–Tyr399 are lumenal. Residues Phe400–Leu417 form a helical membrane-spanning segment. At Ala418–Ile811 the chain is on the cytoplasmic side. The 4-aspartylphosphate intermediate role is filled by Asp455. Mg(2+) is bound by residues Asp756 and Asp760. Residues Gln812 to Phe830 form a helical membrane-spanning segment. Residues Ser831 to Leu841 lie on the Lumenal side of the membrane. Residues Thr842–Ala862 form a helical membrane-spanning segment. Residues Thr863–Phe882 lie on the Cytoplasmic side of the membrane. The helical transmembrane segment at Ile883–Leu905 threads the bilayer. At Gln906–Gly917 the chain is on the lumenal side. The helical transmembrane segment at Ser918 to Asn939 threads the bilayer. Residues Glu940–Asp957 are Cytoplasmic-facing. The chain crosses the membrane as a helical span at residues Asn958 to Leu979. Over Gly980–Thr989 the chain is Lumenal. The helical transmembrane segment at Ile990–Lys1011 threads the bilayer. Over Lys1012 to Val1015 the chain is Cytoplasmic.

Belongs to the cation transport ATPase (P-type) (TC 3.A.3) family. Type IIB subfamily.

Its subcellular location is the membrane. It catalyses the reaction Ca(2+)(in) + ATP + H2O = Ca(2+)(out) + ADP + phosphate + H(+). With respect to regulation, activated by calmodulin. Functionally, this magnesium-dependent enzyme catalyzes the hydrolysis of ATP coupled with the translocation of calcium from the cytosol out of the cell or into organelles. The protein is Putative calcium-transporting ATPase 7, plasma membrane-type (ACA7) of Arabidopsis thaliana (Mouse-ear cress).